The chain runs to 279 residues: Shikimate dehydrogenase (NADP(+)) (279 aa).

Residues 14–16 and Thr63 each bind shikimate; that span reads SIS. The active-site Proton acceptor is the Lys67. Glu79 contacts NADP(+). Shikimate is bound by residues Asn88 and Asp103. NADP(+) is bound by residues 127 to 131, 151 to 156, and Met219; these read GAGGA and NRTYEK. Tyr221 is a shikimate binding site. NADP(+) is bound at residue Gly242.

It belongs to the shikimate dehydrogenase family. As to quaternary structure, homodimer.

It carries out the reaction shikimate + NADP(+) = 3-dehydroshikimate + NADPH + H(+). Its pathway is metabolic intermediate biosynthesis; chorismate biosynthesis; chorismate from D-erythrose 4-phosphate and phosphoenolpyruvate: step 4/7. Involved in the biosynthesis of the chorismate, which leads to the biosynthesis of aromatic amino acids. Catalyzes the reversible NADPH linked reduction of 3-dehydroshikimate (DHSA) to yield shikimate (SA). The chain is Shikimate dehydrogenase (NADP(+)) from Caldicellulosiruptor saccharolyticus (strain ATCC 43494 / DSM 8903 / Tp8T 6331).